The following is a 110-amino-acid chain: Small ribosomal subunit protein mS33 (110 aa).

Positions 84 to 95 (KRRGKGAPKKMK) are enriched in basic residues. The segment at 84-110 (KRRGKGAPKKMKKDAAATAKGKGKKKK) is disordered.

The protein belongs to the mitochondrion-specific ribosomal protein mS33 family. Component of the mitochondrial small ribosomal subunit (mt-SSU). Mature yeast 74S mitochondrial ribosomes consist of a small (37S) and a large (54S) subunit. The 37S small subunit contains a 15S ribosomal RNA (15S mt-rRNA) and 34 different proteins. The 54S large subunit contains a 21S rRNA (21S mt-rRNA) and 46 different proteins.

Its subcellular location is the mitochondrion. Functionally, component of the mitochondrial ribosome (mitoribosome), a dedicated translation machinery responsible for the synthesis of mitochondrial genome-encoded proteins, including at least some of the essential transmembrane subunits of the mitochondrial respiratory chain. The mitoribosomes are attached to the mitochondrial inner membrane and translation products are cotranslationally integrated into the membrane. This chain is Small ribosomal subunit protein mS33 (RSM27), found in Saccharomyces cerevisiae (strain ATCC 204508 / S288c) (Baker's yeast).